The sequence spans 374 residues: Proton-coupled zinc antiporter SLC30A8 (374 aa).

Topologically, residues 1 to 67 (MKGSEEAYLV…QREQTFAKKK (67 aa)) are cytoplasmic. The segment at 18 to 48 (YSLTKDSEKNHPSKPPLQDEENPQSKYHCHN) is disordered. Zn(2+) contacts are provided by His45, Cys46, and His47. Residues 45-47 (HCH) carry the HCH Motif; seals regulatory zinc-binding pocket motif. Residues 68–88 (LCIASLICFVFISAEIVGGYI) traverse the membrane as a helical segment. The Lumenal, vesicle segment spans residues 89–91 (AGS). A helical transmembrane segment spans residues 92 to 112 (LAVVTDAAHLLVDLSSFFISL). Zn(2+) contacts are provided by His100, Asp104, and His131. Residues 113–134 (CSLWLSSKSSTTRLTFGWHRAE) lie on the Cytoplasmic side of the membrane. The chain crosses the membrane as a helical span at residues 135–155 (ILGALMSVITIWLVTGVLVYL). At 156-169 (ACERLIRPDYTIDG) the chain is on the lumenal, vesicle side. Residues 170 to 190 (TVMLITSACALGANLVLALIL) traverse the membrane as a helical segment. Topologically, residues 191–222 (HQSGHGHSHAGGKHEHMASEYKPQTNASIRAA) are cytoplasmic. The chain crosses the membrane as a helical span at residues 223 to 243 (FIHVIGDLFQSISVLISALII). Residues His225 and Asp229 each coordinate Zn(2+). The Lumenal, vesicle segment spans residues 244-251 (YFKPEYKM). The helical transmembrane segment at 252–272 (ADPICTFIFSIFVLITTVTVL) threads the bilayer. The Cytoplasmic segment spans residues 273–374 (RDLLTVLMEG…ECMFCYEPTQ (102 aa)). His306, His323, His350, Glu357, Cys366, and Cys369 together coordinate Zn(2+).

It belongs to the cation diffusion facilitator (CDF) transporter (TC 2.A.4) family. SLC30A subfamily. Homodimer.

It localises to the cytoplasmic vesicle. The protein resides in the secretory vesicle membrane. Its subcellular location is the cell membrane. The catalysed reaction is Zn(2+)(in) + 2 H(+)(out) = Zn(2+)(out) + 2 H(+)(in). Proton-coupled zinc ion antiporter mediating the entry of zinc into the lumen of pancreatic beta cell secretory granules, thereby regulating insulin secretion. This chain is Proton-coupled zinc antiporter SLC30A8 (slc30a8), found in Xenopus tropicalis (Western clawed frog).